The chain runs to 189 residues: Large ribosomal subunit protein bL9 (189 aa).

It belongs to the bacterial ribosomal protein bL9 family.

Functionally, binds to the 23S rRNA. The polypeptide is Large ribosomal subunit protein bL9 (Brucella canis (strain ATCC 23365 / NCTC 10854 / RM-666)).